The following is a 205-amino-acid chain: Red chlorophyll catabolite reductase (205 aa).

Substrate contacts are provided by Glu39 and Asp175.

In terms of assembly, homodimer. Post-translationally, the N-terminus is blocked. As to expression, in etiolated and green primary leaves. Low amount in roots.

It is found in the plastid. It localises to the chloroplast stroma. The catalysed reaction is primary fluorescent chlorophyll catabolite + 2 oxidized [2Fe-2S]-[ferredoxin] = red chlorophyll catabolite + 2 reduced [2Fe-2S]-[ferredoxin] + 3 H(+). Its pathway is porphyrin-containing compound metabolism; chlorophyll degradation. In terms of biological role, catalyzes the key reaction of chlorophyll catabolism, porphyrin macrocycle cleavage of pheophorbide a (pheide a) to a primary fluorescent catabolite (pFCC). Works in a two-step reaction with pheophorbide a oxygenase (PaO) by reducing the C20/C1 double bond of the intermediate, RCC. The sequence is that of Red chlorophyll catabolite reductase (rccR) from Hordeum vulgare (Barley).